Consider the following 179-residue polypeptide: MSRVGKMPIAIPAGVTVTVTPENVVTVKGPKGELVKAMHKDINIAVEDAQVVVTRPSDVKEHRALHGLTRALLNNMVVGVSQGFSKTLELNGVGYRAQLQGKKLVMNLGYSHPVEVEAVDGVDFKLDGTTKVIVEGIDKEKVGAVAANIRSWRKPEPYKGKGIKYSDEVIRRKEGKTGK.

Belongs to the universal ribosomal protein uL6 family. Part of the 50S ribosomal subunit.

Its function is as follows. This protein binds to the 23S rRNA, and is important in its secondary structure. It is located near the subunit interface in the base of the L7/L12 stalk, and near the tRNA binding site of the peptidyltransferase center. The polypeptide is Large ribosomal subunit protein uL6 (Clostridium perfringens (strain ATCC 13124 / DSM 756 / JCM 1290 / NCIMB 6125 / NCTC 8237 / Type A)).